The following is a 128-amino-acid chain: Large ribosomal subunit protein mL51 (128 aa).

A mitochondrion-targeting transit peptide spans 1 to 31; that stretch reads MAGSLSWVAGRRLWGLVPLACRSFFLGVPRL.

Belongs to the mitochondrion-specific ribosomal protein mL51 family. Component of the mitochondrial ribosome large subunit (39S) which comprises a 16S rRNA and about 50 distinct proteins. Interacts with OXA1L.

It is found in the mitochondrion. This Bos taurus (Bovine) protein is Large ribosomal subunit protein mL51 (MRPL51).